Here is a 324-residue protein sequence, read N- to C-terminus: Beta-ketoacyl-[acyl-carrier-protein] synthase III (324 aa).

Residues cysteine 112 and histidine 249 contribute to the active site. The ACP-binding stretch occupies residues 250–254 (QANRR). Residue asparagine 279 is part of the active site.

The protein belongs to the thiolase-like superfamily. FabH family. As to quaternary structure, homodimer.

Its subcellular location is the cytoplasm. The enzyme catalyses malonyl-[ACP] + acetyl-CoA + H(+) = 3-oxobutanoyl-[ACP] + CO2 + CoA. The protein operates within lipid metabolism; fatty acid biosynthesis. In terms of biological role, catalyzes the condensation reaction of fatty acid synthesis by the addition to an acyl acceptor of two carbons from malonyl-ACP. Catalyzes the first condensation reaction which initiates fatty acid synthesis and may therefore play a role in governing the total rate of fatty acid production. Possesses both acetoacetyl-ACP synthase and acetyl transacylase activities. Its substrate specificity determines the biosynthesis of branched-chain and/or straight-chain of fatty acids. This Streptococcus pyogenes serotype M6 (strain ATCC BAA-946 / MGAS10394) protein is Beta-ketoacyl-[acyl-carrier-protein] synthase III.